The chain runs to 347 residues: MKNILDYTLEELTLWMKENNESSFRAKQIMSWIYKDVRNFSDMRNMPKSLIAKLEENFEISLPEIEEIYKSELDGTEKFLFKFSDGNLIESVLMRYKHGNSICISTQIGCRMGCKFCASTIDGRIRNLTTGEILSQILVVQNYIGERISNVVLMGSGEPLDNYENVMKFLEVVSAEYGLNIGQRHITLSTCGIVPKIYELADKELSITLAISLHAFSDEKRKEIMPIANKYSIDEILNACKYFINKTKRRITFEYSLVKDVNDSKEDARALGKLLKGMLCHVNLIPVNEIKERTFKRSSKETIQDFANILSNLGIEVTVRREMGSDINAACGQLRRSYIKTQETRGE.

Glutamate 90 serves as the catalytic Proton acceptor. The Radical SAM core domain maps to 96–326; it reads YKHGNSICIS…VTVRREMGSD (231 aa). Cysteines 103 and 331 form a disulfide. [4Fe-4S] cluster-binding residues include cysteine 110, cysteine 114, and cysteine 117. S-adenosyl-L-methionine contacts are provided by residues 157–158, serine 189, 212–214, and asparagine 288; these read GE and SLH. Cysteine 331 functions as the S-methylcysteine intermediate in the catalytic mechanism.

Belongs to the radical SAM superfamily. RlmN family. [4Fe-4S] cluster is required as a cofactor.

The protein resides in the cytoplasm. It catalyses the reaction adenosine(2503) in 23S rRNA + 2 reduced [2Fe-2S]-[ferredoxin] + 2 S-adenosyl-L-methionine = 2-methyladenosine(2503) in 23S rRNA + 5'-deoxyadenosine + L-methionine + 2 oxidized [2Fe-2S]-[ferredoxin] + S-adenosyl-L-homocysteine. It carries out the reaction adenosine(37) in tRNA + 2 reduced [2Fe-2S]-[ferredoxin] + 2 S-adenosyl-L-methionine = 2-methyladenosine(37) in tRNA + 5'-deoxyadenosine + L-methionine + 2 oxidized [2Fe-2S]-[ferredoxin] + S-adenosyl-L-homocysteine. Functionally, specifically methylates position 2 of adenine 2503 in 23S rRNA and position 2 of adenine 37 in tRNAs. This chain is Probable dual-specificity RNA methyltransferase RlmN, found in Clostridium botulinum (strain Alaska E43 / Type E3).